The chain runs to 196 residues: Pyridoxal 5'-phosphate synthase subunit PdxT (196 aa).

47–49 (GES) serves as a coordination point for L-glutamine. Residue Cys79 is the Nucleophile of the active site. L-glutamine-binding positions include Arg106 and 134 to 135 (IR). Residues His170 and Glu172 each act as charge relay system in the active site.

It belongs to the glutaminase PdxT/SNO family. In terms of assembly, in the presence of PdxS, forms a dodecamer of heterodimers. Only shows activity in the heterodimer.

The catalysed reaction is aldehydo-D-ribose 5-phosphate + D-glyceraldehyde 3-phosphate + L-glutamine = pyridoxal 5'-phosphate + L-glutamate + phosphate + 3 H2O + H(+). The enzyme catalyses L-glutamine + H2O = L-glutamate + NH4(+). It participates in cofactor biosynthesis; pyridoxal 5'-phosphate biosynthesis. Functionally, catalyzes the hydrolysis of glutamine to glutamate and ammonia as part of the biosynthesis of pyridoxal 5'-phosphate. The resulting ammonia molecule is channeled to the active site of PdxS. The protein is Pyridoxal 5'-phosphate synthase subunit PdxT of Bacillus cereus (strain Q1).